The sequence spans 211 residues: uncharacterized protein (211 aa).

This is an uncharacterized protein from Lactuca sativa (Garden lettuce).